Reading from the N-terminus, the 199-residue chain is Recombination protein RecR (199 aa).

A C4-type zinc finger spans residues 57–72; sequence CEICGNMDTENICRIC. The region spanning 80–175 is the Toprim domain; it reads SVIAIVETVA…KISRLASGIP (96 aa).

It belongs to the RecR family.

Its function is as follows. May play a role in DNA repair. It seems to be involved in an RecBC-independent recombinational process of DNA repair. It may act with RecF and RecO. In Rickettsia canadensis (strain McKiel), this protein is Recombination protein RecR.